The sequence spans 191 residues: Putative manganese efflux pump MntP (191 aa).

The next 6 helical transmembrane spans lie at 3–23 (PISI…AAIG), 37–57 (LRAG…GWLL), 65–85 (VEAF…IHMI), 107–129 (WKLA…GLAF), 144–164 (CTLT…SMVG), and 169–189 (IIGG…HLHG).

Belongs to the MntP (TC 9.B.29) family.

The protein resides in the cell inner membrane. Probably functions as a manganese efflux pump. In Stenotrophomonas maltophilia (strain K279a), this protein is Putative manganese efflux pump MntP.